Consider the following 425-residue polypeptide: Raffinose permease (425 aa).

Residues 1-11 (MNSASTHKNTD) lie on the Cytoplasmic side of the membrane. The helical transmembrane segment at 12–32 (FWIFGLFFFLYFFIMATCFPF) threads the bilayer. At 33–48 (LPVWLSDVVGLSKTDT) the chain is on the periplasmic side. A helical transmembrane segment spans residues 49-69 (GIVFSCLSLFAISFQPLLGVI). The Cytoplasmic portion of the chain corresponds to 70–78 (SDRLGLKKN). The chain crosses the membrane as a helical span at residues 79–99 (LIWSISLLLVFFAPFFLYVFA). Over 100 to 105 (PLLHLN) the chain is Periplasmic. Residues 106-126 (IWAGALTGGVFIGFVFSAGAG) form a helical membrane-spanning segment. Over 127–147 (AIEAYIERVSRSSGFEYGKAR) the chain is Cytoplasmic. Residues 148–168 (MFGCLGWALCATMAGILFNVD) form a helical membrane-spanning segment. Position 169 (Pro169) is a topological domain, periplasmic. The chain crosses the membrane as a helical span at residues 170–190 (SLVFWMGSGGALLLLLLLYLA). Residues 191–229 (RPSTSQTAMVMNALGANSSLISTRMVFSLFRMRQMWMFV) are Cytoplasmic-facing. The helical transmembrane segment at 230–250 (LYTIGVACVYDVFDQQFAIFF) threads the bilayer. Residues 251 to 265 (RSFFDTPQAGIKAFG) lie on the Periplasmic side of the membrane. Residues 266–286 (FATTAGEICNAIIMFCTPWII) traverse the membrane as a helical segment. Over 287–294 (NRIGAKNT) the chain is Cytoplasmic. Residues 295–315 (LLVAGGIMTIRITGSAFATTM) form a helical membrane-spanning segment. Position 316 (Thr316) is a topological domain, periplasmic. Residues 317–337 (EVVILKMLHALEVPFLLVGAF) traverse the membrane as a helical segment. Topologically, residues 338–351 (KYITGVFDTRLSAT) are cytoplasmic. Residues 352-372 (VYLIGFQFSKQLAAILLSTFA) traverse the membrane as a helical segment. Over 373-383 (GHLYDRMGFQN) the chain is Periplasmic. A helical membrane pass occupies residues 384 to 404 (TYFVLGMIVLTVTVISAFTLS). The Cytoplasmic segment spans residues 405 to 425 (SSPGIVHPSVEKAPVAHSEIN).

It belongs to the major facilitator superfamily. Oligosaccharide:H(+) symporter (OHS) (TC 2.A.1.5) family. As to quaternary structure, monomer.

It is found in the cell inner membrane. In terms of biological role, responsible for transport of raffinose into the cell. Can also transport lactose and melibiose. Has weak activity with maltose. The polypeptide is Raffinose permease (Escherichia coli).